A 178-amino-acid polypeptide reads, in one-letter code: Cytidylate kinase (178 aa).

7–15 (GLPGTGTTT) is an ATP binding site.

It belongs to the cytidylate kinase family. Type 2 subfamily.

Its subcellular location is the cytoplasm. It carries out the reaction CMP + ATP = CDP + ADP. The catalysed reaction is dCMP + ATP = dCDP + ADP. The protein is Cytidylate kinase of Methanococcus aeolicus (strain ATCC BAA-1280 / DSM 17508 / OCM 812 / Nankai-3).